The following is a 115-amino-acid chain: Large ribosomal subunit protein bL19 (115 aa).

This sequence belongs to the bacterial ribosomal protein bL19 family.

Functionally, this protein is located at the 30S-50S ribosomal subunit interface and may play a role in the structure and function of the aminoacyl-tRNA binding site. The protein is Large ribosomal subunit protein bL19 of Clostridium perfringens (strain ATCC 13124 / DSM 756 / JCM 1290 / NCIMB 6125 / NCTC 8237 / Type A).